We begin with the raw amino-acid sequence, 887 residues long: Transcriptional regulator DEF1 (887 aa).

Positions 1 to 13 (MERRQFNTSNIRN) are enriched in polar residues. Disordered stretches follow at residues 1–117 (MERR…IQPG), 203–293 (KRSL…ESNA), 311–330 (NNET…PRQL), 350–542 (PVLG…QQAQ), 555–578 (NRPP…PQQK), 614–675 (QAPQ…QVPK), 696–758 (QRTL…TQEQ), and 813–887 (NNAN…NLLN). The segment covering 57-75 (SSSQSNSVQNQDQSEDQSQ) has biased composition (low complexity). A compositionally biased stretch (polar residues) spans 76 to 107 (LPQQESNTQQESNTQQESNTPSPRASNTSTET). A coiled-coil region spans residues 199–234 (EEMRKRSLENSRKRELEEAQEREESNKRQHTESSAE). Positions 203–231 (KRSLENSRKRELEEAQEREESNKRQHTES) are enriched in basic and acidic residues. Low complexity predominate over residues 232-254 (SAEPNAESSTESTTESNAESGAE). Positions 261-270 (AESTTESNVE) are enriched in polar residues. Positions 311-326 (NNETNNTGESNSTSQQ) are enriched in low complexity. A compositionally biased stretch (polar residues) spans 364–393 (KTSLTGSQNKVHSTNTQQSQKHPQQILTNS). Low complexity-rich tracts occupy residues 399–408 (QQYSAQSQQQ), 428–456 (QQQQ…QQEL), 475–519 (QQQS…QVQT), and 526–542 (QPQT…QQAQ). Residues 622 to 640 (YQHHYQQVQQRQNQQPYMQ) are compositionally biased toward low complexity. Over residues 641-658 (SAPTYQQPHVQTPKSTRS) the composition is skewed to polar residues. Residues 696–710 (QRTLDNGREPERLRT) show a composition bias toward basic and acidic residues. The span at 729–745 (RSKQSSNQKPVVKQQSS) shows a compositional bias: polar residues. Positions 829-844 (TNTRGGRASTRSSGRP) are enriched in low complexity. A compositionally biased stretch (polar residues) spans 865–887 (TDGSQSQNSGKASKISNIRNLLN).

It localises to the nucleus. Its function is as follows. Transcriptional regulator involved in extension of germ tubes into elongated hyphae and maintenance of filamentous growth. Regulates expression of UME6. Acts in a pathway that regulates maintenance of hyphal growth by repressing hyphal-to-yeast transition and allows dissemination within host epithelial tissues. Dispensable for invasion into both host oral epithelial cells and enterocytes, but required for epithelial damage. This chain is Transcriptional regulator DEF1 (DEF1), found in Candida albicans (strain SC5314 / ATCC MYA-2876) (Yeast).